A 309-amino-acid polypeptide reads, in one-letter code: UDP-N-acetylenolpyruvoylglucosamine reductase (309 aa).

The FAD-binding PCMH-type domain maps to 34-221 (RVGGPAQVLF…TAAREAAQPI (188 aa)). Arginine 179 is an active-site residue. Residue serine 228 is the Proton donor of the active site. Glutamate 298 is an active-site residue.

It belongs to the MurB family. The cofactor is FAD.

It is found in the cytoplasm. The catalysed reaction is UDP-N-acetyl-alpha-D-muramate + NADP(+) = UDP-N-acetyl-3-O-(1-carboxyvinyl)-alpha-D-glucosamine + NADPH + H(+). It participates in cell wall biogenesis; peptidoglycan biosynthesis. Functionally, cell wall formation. This Methylorubrum extorquens (strain PA1) (Methylobacterium extorquens) protein is UDP-N-acetylenolpyruvoylglucosamine reductase.